The following is a 690-amino-acid chain: Elongation factor G (690 aa).

One can recognise a tr-type G domain in the interval 8 to 283; it reads EDYRNFGIMA…AVVDYLPSPI (276 aa). GTP contacts are provided by residues 17-24, 81-85, and 135-138; these read AHIDAGKT, DTPGH, and NKMD.

The protein belongs to the TRAFAC class translation factor GTPase superfamily. Classic translation factor GTPase family. EF-G/EF-2 subfamily.

It is found in the cytoplasm. Functionally, catalyzes the GTP-dependent ribosomal translocation step during translation elongation. During this step, the ribosome changes from the pre-translocational (PRE) to the post-translocational (POST) state as the newly formed A-site-bound peptidyl-tRNA and P-site-bound deacylated tRNA move to the P and E sites, respectively. Catalyzes the coordinated movement of the two tRNA molecules, the mRNA and conformational changes in the ribosome. This is Elongation factor G from Bradyrhizobium diazoefficiens (strain JCM 10833 / BCRC 13528 / IAM 13628 / NBRC 14792 / USDA 110).